A 266-amino-acid chain; its full sequence is HTH-type transcriptional regulator MurR (266 aa).

The 77-residue stretch at 1 to 77 folds into the HTH rpiR-type domain; sequence MLYLTKIRNA…MALIGEYSAS (77 aa). Positions 37–56 form a DNA-binding region, H-T-H motif; it reads SRQMAKQLGISQSSIVKFAQ. Residues 128–266 enclose the SIS domain; the sequence is IIEVISKAPF…LLFVGLVQHQ (139 aa).

As to quaternary structure, homotetramer.

It functions in the pathway amino-sugar metabolism; N-acetylmuramate degradation [regulation]. Represses the expression of the murPQ operon involved in the uptake and degradation of N-acetylmuramic acid (MurNAc). Binds to two adjacent inverted repeats within the operator region. MurNAc 6-phosphate, the substrate of MurQ, is the specific inducer that weakens binding of MurR to the operator. This is HTH-type transcriptional regulator MurR from Shigella flexneri serotype 5b (strain 8401).